Consider the following 342-residue polypeptide: Phenylalanine--tRNA ligase alpha subunit (342 aa).

Position 260 (Glu260) interacts with Mg(2+).

The protein belongs to the class-II aminoacyl-tRNA synthetase family. Phe-tRNA synthetase alpha subunit type 1 subfamily. As to quaternary structure, tetramer of two alpha and two beta subunits. It depends on Mg(2+) as a cofactor.

It localises to the cytoplasm. The enzyme catalyses tRNA(Phe) + L-phenylalanine + ATP = L-phenylalanyl-tRNA(Phe) + AMP + diphosphate + H(+). The protein is Phenylalanine--tRNA ligase alpha subunit of Mycobacterium avium (strain 104).